A 190-amino-acid chain; its full sequence is Orotate phosphoribosyltransferase (190 aa).

Residue 114–122 participates in 5-phospho-alpha-D-ribose 1-diphosphate binding; the sequence is EDVVTTGGS. 2 residues coordinate orotate: Thr-118 and Arg-146.

Belongs to the purine/pyrimidine phosphoribosyltransferase family. PyrE subfamily. In terms of assembly, homodimer. It depends on Mg(2+) as a cofactor.

It catalyses the reaction orotidine 5'-phosphate + diphosphate = orotate + 5-phospho-alpha-D-ribose 1-diphosphate. It participates in pyrimidine metabolism; UMP biosynthesis via de novo pathway; UMP from orotate: step 1/2. Catalyzes the transfer of a ribosyl phosphate group from 5-phosphoribose 1-diphosphate to orotate, leading to the formation of orotidine monophosphate (OMP). This is Orotate phosphoribosyltransferase from Thermoanaerobacter sp. (strain X514).